The chain runs to 252 residues: MASSSAKILLPLSLLFTLLSLSQSTNPNFILTLVNNCPYTIWPAIQPNAGHPVLERGGFTLHSLTHRSFPAPNAHWSGRIWARTGCNYQHGKFYCATGDCGGRIECDGLGGAAPATLAQFVLHHGHADFSTYGVSLVDGFNIPLTVTPHEGKGVCPVVGCRANLLESCPAVLQFRSHGGHGPVVGCKSACEAFKSDEFCCRNHYNSPQTCKPSSYSQFFKHACPATFTYAHDSPSLMHECSSPRELKVIFCH.

An N-terminal signal peptide occupies residues 1–24 (MASSSAKILLPLSLLFTLLSLSQS).

The protein resides in the secreted. Its subcellular location is the cell wall. The sequence is that of Osmotin-like protein from Solanum lycopersicum (Tomato).